The primary structure comprises 1097 residues: Platelet-derived growth factor receptor beta (1097 aa).

Residues 1–31 form the signal peptide; sequence MGLPEVMPASVLRGQLLLFVLLLLGPQISQG. Ig-like C2-type domains lie at 32–119, 128–209, and 213–308; these read LVIT…YIFV, PMDS…YSLQ, and INVS…INVT. Over 32–531 the chain is Extracellular; it reads LVITPPGPEF…VVPHSLPFKV (500 aa). 3 N-linked (GlcNAc...) asparagine glycosylation sites follow: N44, N88, and N102. Cysteines 53 and 99 form a disulfide. The cysteines at positions 148 and 189 are disulfide-linked. N-linked (GlcNAc...) asparagine glycosylation occurs at N214. C234 and C290 are oxidised to a cystine. Residues N291, N306, N353, N370, N444, N467, and N478 are each glycosylated (N-linked (GlcNAc...) asparagine). An Ig-like C2-type 4 domain is found at 415-523; that stretch reads PVRVLELSES…GRDSQEVTVV (109 aa). C435 and C507 are disulfide-bonded. A helical transmembrane segment spans residues 532–552; the sequence is VVISAILALVVLTVISLIILI. Residues 553–1097 lie on the Cytoplasmic side of the membrane; that stretch reads MLWQRKPRYE…PLAEAEDSFL (545 aa). A phosphotyrosine; by autocatalysis mark is found at Y561, Y578, and Y580. The Protein kinase domain occupies 599–961; sequence LVLGRTLGSG…QLVLLLERLL (363 aa). Residues 605 to 613 and K633 each bind ATP; that span reads LGSGAFGQV. The residue at position 685 (Y685) is a Phosphotyrosine; by ABL1 and ABL2. 7 positions are modified to phosphotyrosine; by autocatalysis: Y715, Y739, Y750, Y762, Y770, Y774, and Y777. D825 (proton acceptor) is an active-site residue. Position 856 is a phosphotyrosine; by autocatalysis (Y856). Phosphotyrosine; by ABL1 and ABL2 occurs at positions 933 and 969. Phosphotyrosine; by autocatalysis is present on residues Y1008 and Y1020. Residues 1016-1097 are disordered; the sequence is TDNDYIIPLP…PLAEAEDSFL (82 aa). Polar residues predominate over residues 1042–1059; sequence SLASSTLNEVNTSSTISC. Over residues 1072–1081 the composition is skewed to low complexity; that stretch reads EPEAQLEQPQ.

Belongs to the protein kinase superfamily. Tyr protein kinase family. CSF-1/PDGF receptor subfamily. As to quaternary structure, interacts with homodimeric PDGFB and PDGFD, and with heterodimers formed by PDGFA and PDGFB. May also interact with homodimeric PDGFC. Monomer in the absence of bound ligand. Interaction with homodimeric PDGFB, heterodimers formed by PDGFA and PDGFB or homodimeric PDGFD, leads to receptor dimerization, where both PDGFRA homodimers and heterodimers with PDGFRB are observed. Interacts with SH2B2/APS. Interacts directly (tyrosine phosphorylated) with SHB. Interacts (tyrosine phosphorylated) with PIK3R1 and RASA1. Interacts (tyrosine phosphorylated) with CBL. Interacts (tyrosine phosphorylated) with SRC and SRC family kinases. Interacts (tyrosine phosphorylated) with PIK3C2B, maybe indirectly. Interacts (tyrosine phosphorylated) with SHC1, GRB7, GRB10 and NCK1. Interaction with GRB2 is mediated by SHC1. Interacts (via C-terminus) with NHERF1. Post-translationally, N-glycosylated. Ubiquitinated. After autophosphorylation, the receptor is polyubiquitinated, leading to its degradation. In terms of processing, autophosphorylated on tyrosine residues upon ligand binding. Autophosphorylation occurs in trans, i.e. one subunit of the dimeric receptor phosphorylates tyrosine residues on the other subunit. Phosphorylation at Tyr-578, and to a lesser degree, Tyr-580 is important for interaction with SRC. Phosphorylation at Tyr-715 is important for interaction with GRB2. Phosphorylation at Tyr-739 and Tyr-750 is important for interaction with PIK3R1. Phosphorylation at Tyr-750 is important for interaction with NCK1. Phosphorylation at Tyr-770 and Tyr-856 is important for interaction with RASA1/GAP. Phosphorylation at Tyr-856 is important for efficient phosphorylation of PLCG1 and PTPN11, resulting in increased phosphorylation of AKT1, MAPK1/ERK2 and/or MAPK3/ERK1, PDCD6IP/ALIX and STAM, and in increased cell proliferation. Phosphorylation at Tyr-1008 is important for interaction with PTPN11. Phosphorylation at Tyr-1008 and Tyr-1020 is important for interaction with PLCG1. Dephosphorylated by PTPRJ at Tyr-750, Tyr-856, Tyr-1008 and Tyr-1020. Dephosphorylated by PTPN2 at Tyr-578 and Tyr-1020.

The protein resides in the cell membrane. The protein localises to the cytoplasmic vesicle. Its subcellular location is the lysosome lumen. It catalyses the reaction L-tyrosyl-[protein] + ATP = O-phospho-L-tyrosyl-[protein] + ADP + H(+). With respect to regulation, present in an inactive conformation in the absence of bound ligand. Binding of PDGFB and/or PDGFD leads to dimerization and activation by autophosphorylation on tyrosine residues. Tyrosine-protein kinase that acts as a cell-surface receptor for homodimeric PDGFB and PDGFD and for heterodimers formed by PDGFA and PDGFB, and plays an essential role in the regulation of embryonic development, cell proliferation, survival, differentiation, chemotaxis and migration. Plays an essential role in blood vessel development by promoting proliferation, migration and recruitment of pericytes and smooth muscle cells to endothelial cells. Plays a role in the migration of vascular smooth muscle cells and the formation of neointima at vascular injury sites. Required for normal development of the cardiovascular system. Required for normal recruitment of pericytes (mesangial cells) in the kidney glomerulus, and for normal formation of a branched network of capillaries in kidney glomeruli. Promotes rearrangement of the actin cytoskeleton and the formation of membrane ruffles. Binding of its cognate ligands - homodimeric PDGFB, heterodimers formed by PDGFA and PDGFB or homodimeric PDGFD -leads to the activation of several signaling cascades; the response depends on the nature of the bound ligand and is modulated by the formation of heterodimers between PDGFRA and PDGFRB. Phosphorylates PLCG1, PIK3R1, PTPN11, RASA1/GAP, CBL, SHC1 and NCK1. Activation of PLCG1 leads to the production of the cellular signaling molecules diacylglycerol and inositol 1,4,5-trisphosphate, mobilization of cytosolic Ca(2+) and the activation of protein kinase C. Phosphorylation of PIK3R1, the regulatory subunit of phosphatidylinositol 3-kinase, leads to the activation of the AKT1 signaling pathway. Phosphorylation of SHC1, or of the C-terminus of PTPN11, creates a binding site for GRB2, resulting in the activation of HRAS, RAF1 and down-stream MAP kinases, including MAPK1/ERK2 and/or MAPK3/ERK1. Promotes phosphorylation and activation of SRC family kinases. Promotes phosphorylation of PDCD6IP/ALIX and STAM. Receptor signaling is down-regulated by protein phosphatases that dephosphorylate the receptor and its down-stream effectors, and by rapid internalization of the activated receptor. In Rattus norvegicus (Rat), this protein is Platelet-derived growth factor receptor beta (Pdgfrb).